A 247-amino-acid chain; its full sequence is Probable transcriptional regulatory protein YPO2055/y2255/YP_1898 (247 aa).

Belongs to the TACO1 family.

It localises to the cytoplasm. In Yersinia pestis, this protein is Probable transcriptional regulatory protein YPO2055/y2255/YP_1898.